The chain runs to 445 residues: Maltoporin (445 aa).

The N-terminal stretch at 1–24 (MITLRKLPLAVAVAAGVMSAQAMA) is a signal peptide.

It belongs to the porin LamB (TC 1.B.3) family. In terms of assembly, homotrimer formed of three 18-stranded antiparallel beta-barrels, containing three independent channels.

Its subcellular location is the cell outer membrane. It carries out the reaction beta-maltose(in) = beta-maltose(out). Involved in the transport of maltose and maltodextrins. This chain is Maltoporin, found in Shigella flexneri.